The primary structure comprises 203 residues: Small ribosomal subunit protein eS1 (203 aa).

It belongs to the eukaryotic ribosomal protein eS1 family.

This Methanosarcina acetivorans (strain ATCC 35395 / DSM 2834 / JCM 12185 / C2A) protein is Small ribosomal subunit protein eS1.